The sequence spans 257 residues: GTP cyclohydrolase III (257 aa).

It belongs to the archaeal-type GTP cyclohydrolase family.

It carries out the reaction GTP + 3 H2O = 2-amino-5-formylamino-6-(5-phospho-D-ribosylamino)pyrimidin-4(3H)-one + 2 phosphate + 2 H(+). In terms of biological role, catalyzes the formation of 2-amino-5-formylamino-6-ribofuranosylamino-4(3H)-pyrimidinone ribonucleotide monophosphate and inorganic phosphate from GTP. Also has an independent pyrophosphate phosphohydrolase activity. In Halorubrum lacusprofundi (strain ATCC 49239 / DSM 5036 / JCM 8891 / ACAM 34), this protein is GTP cyclohydrolase III.